We begin with the raw amino-acid sequence, 456 residues long: Exodeoxyribonuclease 7 large subunit (456 aa).

This sequence belongs to the XseA family. Heterooligomer composed of large and small subunits.

It localises to the cytoplasm. It catalyses the reaction Exonucleolytic cleavage in either 5'- to 3'- or 3'- to 5'-direction to yield nucleoside 5'-phosphates.. Functionally, bidirectionally degrades single-stranded DNA into large acid-insoluble oligonucleotides, which are then degraded further into small acid-soluble oligonucleotides. This Escherichia coli O157:H7 protein is Exodeoxyribonuclease 7 large subunit.